We begin with the raw amino-acid sequence, 92 residues long: MNRLQQRQLFLENLLVGVNSTFHQMQKHSINTCCRSLQRILDHLILLQTIHSPVFRLDRMQLRQMQTLACLWIHQHNHDLQVMSDAIKWISP.

Belongs to the rotavirus A NSP6 family. In terms of assembly, interacts with NSP2 and NSP5.

The protein resides in the host cytoplasm. The protein localises to the host mitochondrion. The polypeptide is Non-structural protein 6 (Rotavirus A (strain RVA/SA11-Both/G3P5B[2]) (RV-A)).